Consider the following 707-residue polypeptide: Bone morphogenetic protein 1 (707 aa).

The disordered stretch occupies residues 57–90; sequence SGAATNISRPEKGRRTRKERRRSREKRASTSRPE. A glycan (N-linked (GlcNAc...) asparagine) is linked at Asn-62. The span at 68–81 shows a compositional bias: basic residues; sequence KGRRTRKERRRSRE. Residues 84–283 enclose the Peptidase M12A domain; sequence ASTSRPERVW…AQARKLYKCP (200 aa). Residue Asn-105 is glycosylated (N-linked (GlcNAc...) asparagine). Cystine bridges form between Cys-126/Cys-282, Cys-146/Cys-168, Cys-148/Cys-149, and Cys-285/Cys-311. Position 176 (His-176) interacts with Zn(2+). The active site involves Glu-177. Zn(2+) contacts are provided by His-180 and His-186. CUB domains are found at residues 285–397 and 398–509; these read CGET…YEAL and CGGE…NYFK. Residues Asn-295 and Asn-326 are each glycosylated (N-linked (GlcNAc...) asparagine). Intrachain disulfides connect Cys-338–Cys-360, Cys-398–Cys-424, Cys-451–Cys-473, Cys-514–Cys-526, Cys-522–Cys-535, Cys-537–Cys-550, Cys-554–Cys-580, and Cys-607–Cys-629. One can recognise an EGF-like; calcium-binding domain in the interval 510–551; the sequence is EVDECSRPNNGGCEQRCVNTLGSYKCACDPGYELGQDKKSCE. Residues 554–666 form the CUB 3 domain; that stretch reads CGGFLTKLNG…KGFQANFFSE (113 aa). Asn-562 is a glycosylation site (N-linked (GlcNAc...) asparagine). Residues 682-707 form a disordered region; the sequence is RGQQNQAPKRVRPRMRLRTVKKTRPP. The segment covering 690-707 has biased composition (basic residues); it reads KRVRPRMRLRTVKKTRPP.

In terms of assembly, interacts with olfml3/ont1. Zn(2+) serves as cofactor. Post-translationally, proteolytically activated in the trans-Golgi network by furin-like/paired basic proprotein convertases, cleavage is not required for secretion.

It localises to the golgi apparatus. The protein resides in the trans-Golgi network. It is found in the secreted. Its subcellular location is the extracellular space. The protein localises to the extracellular matrix. In terms of biological role, metalloprotease involved in pattern formation in gastrula and later differentiation of developing organs. Able to cleave chordin (chrd), suggesting that it may act in dorsoventral patterning during early development by regulating the chordin (chrd) activity. The polypeptide is Bone morphogenetic protein 1 (bmp1) (Xenopus laevis (African clawed frog)).